A 103-amino-acid polypeptide reads, in one-letter code: UPF0145 protein RSKD131_1772 (103 aa).

It belongs to the UPF0145 family.

The sequence is that of UPF0145 protein RSKD131_1772 from Cereibacter sphaeroides (strain KD131 / KCTC 12085) (Rhodobacter sphaeroides).